The primary structure comprises 481 residues: Probable glycine dehydrogenase (decarboxylating) subunit 2 (481 aa).

Residues 1–26 (MVIFEKTRGKNSPSVMPSKKGDVSNI) form a disordered region. Residue K263 is modified to N6-(pyridoxal phosphate)lysine.

The protein belongs to the GcvP family. C-terminal subunit subfamily. The glycine cleavage system is composed of four proteins: P, T, L and H. In this organism, the P 'protein' is a heterodimer of two subunits. Pyridoxal 5'-phosphate serves as cofactor.

It carries out the reaction N(6)-[(R)-lipoyl]-L-lysyl-[glycine-cleavage complex H protein] + glycine + H(+) = N(6)-[(R)-S(8)-aminomethyldihydrolipoyl]-L-lysyl-[glycine-cleavage complex H protein] + CO2. The glycine cleavage system catalyzes the degradation of glycine. The P protein binds the alpha-amino group of glycine through its pyridoxal phosphate cofactor; CO(2) is released and the remaining methylamine moiety is then transferred to the lipoamide cofactor of the H protein. This Francisella tularensis subsp. mediasiatica (strain FSC147) protein is Probable glycine dehydrogenase (decarboxylating) subunit 2.